The sequence spans 178 residues: ATP synthase subunit delta (178 aa).

The protein belongs to the ATPase delta chain family. In terms of assembly, F-type ATPases have 2 components, F(1) - the catalytic core - and F(0) - the membrane proton channel. F(1) has five subunits: alpha(3), beta(3), gamma(1), delta(1), epsilon(1). F(0) has three main subunits: a(1), b(2) and c(10-14). The alpha and beta chains form an alternating ring which encloses part of the gamma chain. F(1) is attached to F(0) by a central stalk formed by the gamma and epsilon chains, while a peripheral stalk is formed by the delta and b chains.

Its subcellular location is the cell inner membrane. Its function is as follows. F(1)F(0) ATP synthase produces ATP from ADP in the presence of a proton or sodium gradient. F-type ATPases consist of two structural domains, F(1) containing the extramembraneous catalytic core and F(0) containing the membrane proton channel, linked together by a central stalk and a peripheral stalk. During catalysis, ATP synthesis in the catalytic domain of F(1) is coupled via a rotary mechanism of the central stalk subunits to proton translocation. This protein is part of the stalk that links CF(0) to CF(1). It either transmits conformational changes from CF(0) to CF(1) or is implicated in proton conduction. The chain is ATP synthase subunit delta from Acinetobacter baumannii (strain AB307-0294).